The sequence spans 447 residues: Phosphoglucosamine mutase (447 aa).

Ser-88 (phosphoserine intermediate) is an active-site residue. Ser-88, Asp-231, Asp-233, and Asp-235 together coordinate Mg(2+). Phosphoserine is present on Ser-88.

The protein belongs to the phosphohexose mutase family. It depends on Mg(2+) as a cofactor. Activated by phosphorylation.

It catalyses the reaction alpha-D-glucosamine 1-phosphate = D-glucosamine 6-phosphate. Functionally, catalyzes the conversion of glucosamine-6-phosphate to glucosamine-1-phosphate. The chain is Phosphoglucosamine mutase from Methanococcus maripaludis (strain C7 / ATCC BAA-1331).